The following is a 216-amino-acid chain: Kynurenine formamidase (216 aa).

A substrate-binding site is contributed by Trp24. Residues His54, His58, and Asp60 each contribute to the Zn(2+) site. The active-site Proton donor/acceptor is His64. 2 residues coordinate Zn(2+): His164 and Glu176.

The protein belongs to the Cyclase 1 superfamily. KynB family. In terms of assembly, homodimer. The cofactor is Zn(2+).

It catalyses the reaction N-formyl-L-kynurenine + H2O = L-kynurenine + formate + H(+). It functions in the pathway amino-acid degradation; L-tryptophan degradation via kynurenine pathway; L-kynurenine from L-tryptophan: step 2/2. Functionally, catalyzes the hydrolysis of N-formyl-L-kynurenine to L-kynurenine, the second step in the kynurenine pathway of tryptophan degradation. This chain is Kynurenine formamidase, found in Erythrobacter litoralis (strain HTCC2594).